The primary structure comprises 299 residues: ATP phosphoribosyltransferase (299 aa).

This sequence belongs to the ATP phosphoribosyltransferase family. Long subfamily. Equilibrium between an active dimeric form, an inactive hexameric form and higher aggregates. Interconversion between the various forms is largely reversible and is influenced by the natural substrates and inhibitors of the enzyme. Requires Mg(2+) as cofactor.

It is found in the cytoplasm. It catalyses the reaction 1-(5-phospho-beta-D-ribosyl)-ATP + diphosphate = 5-phospho-alpha-D-ribose 1-diphosphate + ATP. The protein operates within amino-acid biosynthesis; L-histidine biosynthesis; L-histidine from 5-phospho-alpha-D-ribose 1-diphosphate: step 1/9. Feedback inhibited by histidine. Its function is as follows. Catalyzes the condensation of ATP and 5-phosphoribose 1-diphosphate to form N'-(5'-phosphoribosyl)-ATP (PR-ATP). Has a crucial role in the pathway because the rate of histidine biosynthesis seems to be controlled primarily by regulation of HisG enzymatic activity. This is ATP phosphoribosyltransferase from Escherichia coli O157:H7.